The primary structure comprises 272 residues: Putative UTP--glucose-1-phosphate uridylyltransferase (272 aa).

Belongs to the UDPGP type 2 family.

The catalysed reaction is alpha-D-glucose 1-phosphate + UTP + H(+) = UDP-alpha-D-glucose + diphosphate. The sequence is that of Putative UTP--glucose-1-phosphate uridylyltransferase (ytdA) from Bacillus subtilis (strain 168).